We begin with the raw amino-acid sequence, 146 residues long: Large ribosomal subunit protein uL24z (146 aa).

Disordered regions lie at residues 1–26 (MKYNPRVTSSRRKNRKAHFTASSSER) and 121–146 (KAKGRAAADKEKGTKFTSEDVMQNVD). A compositionally biased stretch (basic residues) spans 9–18 (SSRRKNRKAH). Over residues 121–138 (KAKGRAAADKEKGTKFTS) the composition is skewed to basic and acidic residues.

The protein belongs to the universal ribosomal protein uL24 family.

The sequence is that of Large ribosomal subunit protein uL24z (RPL26A) from Arabidopsis thaliana (Mouse-ear cress).